We begin with the raw amino-acid sequence, 609 residues long: Dihydroxyacetone kinase (609 aa).

The DhaK domain maps to 8–355; the sequence is YKQDLVHAHL…LDYPTKVPGW (348 aa). Residues 53-56, Lys104, and Asp109 contribute to the substrate site; that span reads GSGH. His232 acts as the Tele-hemiaminal-histidine intermediate in catalysis. The DhaL domain occupies 392 to 600; it reads STVKAVLESG…LAALVDGFAE (209 aa). Residues 421-424, 467-468, 523-524, and 585-587 each bind ATP; these read DGDC, TS, TL, and DPG.

Belongs to the dihydroxyacetone kinase (DAK) family.

The enzyme catalyses dihydroxyacetone + ATP = dihydroxyacetone phosphate + ADP + H(+). It carries out the reaction D-glyceraldehyde + ATP = D-glyceraldehyde 3-phosphate + ADP + H(+). The protein operates within polyol metabolism; glycerol fermentation; glycerone phosphate from glycerol (oxidative route): step 2/2. Its function is as follows. Catalyzes both the phosphorylation of dihydroxyacetone and of glyceraldehyde. The chain is Dihydroxyacetone kinase (DAK) from Pichia angusta (Yeast).